Here is an 84-residue protein sequence, read N- to C-terminus: Control protein C.SmaI (84 aa).

An HTH cro/C1-type domain is found at 19–73 (VRSYRNINNLSQEQLAEISGLHRTYIGSVERKERNVTLSTLIILAKALNTSVPKL). The segment at residues 30–49 (QEQLAEISGLHRTYIGSVER) is a DNA-binding region (H-T-H motif).

Functionally, may control expression of its associated restriction-modification system SmaI. The polypeptide is Control protein C.SmaI (Serratia marcescens).